A 301-amino-acid polypeptide reads, in one-letter code: uncharacterized protein (301 aa).

This is an uncharacterized protein from Methanocaldococcus jannaschii (strain ATCC 43067 / DSM 2661 / JAL-1 / JCM 10045 / NBRC 100440) (Methanococcus jannaschii).